The sequence spans 529 residues: MTSTVTQQAANALPPVARTYQVRTYGCQMNVHDSERLAGLLEDAGYRRAADGADADVVVFNTCAVRENADNKLYGNLSHLAPRKRSEPQMQIAVGGCLAQKDRDAVLRRAPWVDVVFGTHNIGSLPTLLERARHNRAAQVEIAEALQEFPSTLPAARESAYAGWVSISVGCNNTCTFCIVPSLRGKEVDRRPGDVLAEIQTLVDQGVLEVTLLGQNVNAYGVSFAADERLREDPRMWQSVPRNRGAFAELLRACGRIDGLERVRFTSPHPAEFTDDVIEAMAETPNVCPALHMPLQSGSDRILRAMRRSYRAEKYLGIIDRVRAAIPDAAITTDLIVGFPGETEEDFQATLDVVAASRFSSAFTFQYSKRPGTPAADMPGQLPKAVVSERYQRLIELQERISLEENQAQVGRTLELLVATGEGRKDAATARLSGRARDGRLVHFAPGAAADEPLARRAFDQVRPGDVVTTTVTGAAPHHLIADGALLTHRRTRAGDAHAAGLRPRTGVGLGIPGVGAPAPAPVTTGCAL.

The region spanning 18–134 (RTYQVRTYGC…LPTLLERARH (117 aa)) is the MTTase N-terminal domain. Residues Cys-27, Cys-63, Cys-97, Cys-171, Cys-175, and Cys-178 each contribute to the [4Fe-4S] cluster site. Positions 157-404 (RESAYAGWVS…IELQERISLE (248 aa)) constitute a Radical SAM core domain. Positions 407–486 (QAQVGRTLEL…PHHLIADGAL (80 aa)) constitute a TRAM domain.

The protein belongs to the methylthiotransferase family. MiaB subfamily. As to quaternary structure, monomer. [4Fe-4S] cluster serves as cofactor.

Its subcellular location is the cytoplasm. The enzyme catalyses N(6)-dimethylallyladenosine(37) in tRNA + (sulfur carrier)-SH + AH2 + 2 S-adenosyl-L-methionine = 2-methylsulfanyl-N(6)-dimethylallyladenosine(37) in tRNA + (sulfur carrier)-H + 5'-deoxyadenosine + L-methionine + A + S-adenosyl-L-homocysteine + 2 H(+). Its function is as follows. Catalyzes the methylthiolation of N6-(dimethylallyl)adenosine (i(6)A), leading to the formation of 2-methylthio-N6-(dimethylallyl)adenosine (ms(2)i(6)A) at position 37 in tRNAs that read codons beginning with uridine. In Mycobacterium sp. (strain KMS), this protein is tRNA-2-methylthio-N(6)-dimethylallyladenosine synthase.